Here is a 908-residue protein sequence, read N- to C-terminus: DNA polymerase I (908 aa).

Positions Met-1–Asn-318 constitute a 5'-3' exonuclease domain. The 213-residue stretch at Val-319–Lys-531 folds into the 3'-5' exonuclease domain. A polymerase region spans residues Glu-532–His-908.

Belongs to the DNA polymerase type-A family.

The catalysed reaction is DNA(n) + a 2'-deoxyribonucleoside 5'-triphosphate = DNA(n+1) + diphosphate. Functionally, in addition to polymerase activity, this DNA polymerase exhibits 3'-5' and 5'-3' exonuclease activity. The protein is DNA polymerase I (polA) of Borreliella burgdorferi (strain ATCC 35210 / DSM 4680 / CIP 102532 / B31) (Borrelia burgdorferi).